The chain runs to 247 residues: Ribonuclease 3 (247 aa).

In terms of domain architecture, RNase III spans 21–149; it reads LQKLSKKIGI…LVGAIYLDQG (129 aa). Mg(2+) is bound at residue Glu62. Asp66 is an active-site residue. Residues Asn135 and Glu138 each contribute to the Mg(2+) site. Glu138 is a catalytic residue. Residues 176–245 form the DRBM domain; sequence DYKTQLQEYS…AKELYNRIRK (70 aa).

Belongs to the ribonuclease III family. As to quaternary structure, homodimer. It depends on Mg(2+) as a cofactor.

It is found in the cytoplasm. It catalyses the reaction Endonucleolytic cleavage to 5'-phosphomonoester.. Its function is as follows. Digests double-stranded RNA. Involved in the processing of primary rRNA transcript to yield the immediate precursors to the large and small rRNAs (23S and 16S). Processes some mRNAs, and tRNAs when they are encoded in the rRNA operon. Processes pre-crRNA and tracrRNA of type II CRISPR loci if present in the organism. The sequence is that of Ribonuclease 3 from Leptospira interrogans serogroup Icterohaemorrhagiae serovar copenhageni (strain Fiocruz L1-130).